A 119-amino-acid chain; its full sequence is Amicyanin-alpha (119 aa).

A signal peptide spans 1–20 (MRALAFAAALAAFSATAALA). The Plastocyanin-like domain maps to 21–119 (AGALEAVQEA…PFMKGKVVVE (99 aa)). Cu cation-binding residues include His-67, Cys-106, His-109, and Met-112.

The cofactor is Cu cation.

It localises to the periplasm. It functions in the pathway one-carbon metabolism; methylamine degradation. In terms of biological role, primary acceptor of electrons from methylamine dehydrogenase. Passes those electrons on either a soluble cytochrome c or to pseudoazurin. This Methylorubrum extorquens (strain ATCC 14718 / DSM 1338 / JCM 2805 / NCIMB 9133 / AM1) (Methylobacterium extorquens) protein is Amicyanin-alpha (mauC).